Consider the following 487-residue polypeptide: Probable cobyric acid synthase (487 aa).

A GATase cobBQ-type domain is found at 249-435 (DVDIAVVRFP…LHGIFNNASF (187 aa)). C328 (nucleophile) is an active-site residue. H427 is an active-site residue.

Belongs to the CobB/CobQ family. CobQ subfamily.

Its pathway is cofactor biosynthesis; adenosylcobalamin biosynthesis. Catalyzes amidations at positions B, D, E, and G on adenosylcobyrinic A,C-diamide. NH(2) groups are provided by glutamine, and one molecule of ATP is hydrogenolyzed for each amidation. In Methanocella arvoryzae (strain DSM 22066 / NBRC 105507 / MRE50), this protein is Probable cobyric acid synthase.